A 311-amino-acid polypeptide reads, in one-letter code: DNA-directed RNA polymerase subunit alpha (311 aa).

An alpha N-terminal domain (alpha-NTD) region spans residues 1–227 (MAQFQIECVE…NLFCSLRNLD (227 aa)). Positions 242–311 (ISQVLIEELQ…GISLPKEKTD (70 aa)) are alpha C-terminal domain (alpha-CTD).

The protein belongs to the RNA polymerase alpha chain family. In terms of assembly, in plastids the minimal PEP RNA polymerase catalytic core is composed of four subunits: alpha, beta, beta', and beta''. When a (nuclear-encoded) sigma factor is associated with the core the holoenzyme is formed, which can initiate transcription.

The protein localises to the plastid. Its subcellular location is the chloroplast. The catalysed reaction is RNA(n) + a ribonucleoside 5'-triphosphate = RNA(n+1) + diphosphate. In terms of biological role, DNA-dependent RNA polymerase catalyzes the transcription of DNA into RNA using the four ribonucleoside triphosphates as substrates. The polypeptide is DNA-directed RNA polymerase subunit alpha (Porphyra purpurea (Red seaweed)).